The sequence spans 424 residues: Deoxyguanosinetriphosphate triphosphohydrolase-like protein (424 aa).

Residues 1-10 (MEGTAPPTPY) are compositionally biased toward pro residues. A disordered region spans residues 1 to 31 (MEGTAPPTPYDPASVARYAPEPDKRPGRTAF). The segment covering 20 to 31 (PEPDKRPGRTAF) has biased composition (basic and acidic residues). Residues 70-220 (RLTHSLECAQ…MDWADDVAYS (151 aa)) form the HD domain.

This sequence belongs to the dGTPase family. Type 2 subfamily.

The polypeptide is Deoxyguanosinetriphosphate triphosphohydrolase-like protein (Streptomyces coelicolor (strain ATCC BAA-471 / A3(2) / M145)).